The primary structure comprises 127 residues: Large ribosomal subunit protein uL22 (127 aa).

The protein belongs to the universal ribosomal protein uL22 family. As to quaternary structure, part of the 50S ribosomal subunit.

Functionally, this protein binds specifically to 23S rRNA; its binding is stimulated by other ribosomal proteins, e.g. L4, L17, and L20. It is important during the early stages of 50S assembly. It makes multiple contacts with different domains of the 23S rRNA in the assembled 50S subunit and ribosome. In terms of biological role, the globular domain of the protein is located near the polypeptide exit tunnel on the outside of the subunit, while an extended beta-hairpin is found that lines the wall of the exit tunnel in the center of the 70S ribosome. The sequence is that of Large ribosomal subunit protein uL22 from Methylobacterium sp. (strain 4-46).